The primary structure comprises 95 residues: Co-chaperonin GroES (95 aa).

Belongs to the GroES chaperonin family. As to quaternary structure, heptamer of 7 subunits arranged in a ring. Interacts with the chaperonin GroEL.

Its subcellular location is the cytoplasm. Functionally, together with the chaperonin GroEL, plays an essential role in assisting protein folding. The GroEL-GroES system forms a nano-cage that allows encapsulation of the non-native substrate proteins and provides a physical environment optimized to promote and accelerate protein folding. GroES binds to the apical surface of the GroEL ring, thereby capping the opening of the GroEL channel. The sequence is that of Co-chaperonin GroES from Oleidesulfovibrio alaskensis (strain ATCC BAA-1058 / DSM 17464 / G20) (Desulfovibrio alaskensis).